The chain runs to 555 residues: Synaptotagmin-14 (555 aa).

At 1 to 24 (MAIEGGERTCGVHELICIRKVSPE) the chain is on the extracellular side. Residues 25 to 47 (AVGFLSAVGVFIILMLLLFLYIN) traverse the membrane as a helical; Signal-anchor for type III membrane protein segment. Residues 48-555 (KKFCFENVGG…VCRWHALLES (508 aa)) lie on the Cytoplasmic side of the membrane. Disordered stretches follow at residues 157–179 (TPPL…HLSC) and 222–257 (GYEE…DPEP). C2 domains are found at residues 260–379 (KYGT…SLPV) and 415–550 (SVPE…CRWH).

It belongs to the synaptotagmin family. In terms of assembly, homodimer. Can also form heterodimers. Highly expressed in fetal and adult brain tissue.

It is found in the membrane. May be involved in the trafficking and exocytosis of secretory vesicles in non-neuronal tissues. Is Ca(2+)-independent. The protein is Synaptotagmin-14 (SYT14) of Homo sapiens (Human).